We begin with the raw amino-acid sequence, 311 residues long: Phosphoglycerate mutase 2 (311 aa).

Substrate contacts are provided by residues Arg-16 to Asn-23, Cys-29 to Gly-30, Arg-73, Glu-126 to Tyr-129, Lys-137, Arg-153 to Arg-154, and Gly-243 to Ser-244. Residue His-17 is the Tele-phosphohistidine intermediate of the active site. Glu-126 (proton donor/acceptor) is an active-site residue.

Belongs to the phosphoglycerate mutase family. BPG-dependent PGAM subfamily.

The protein localises to the cytoplasm. The enzyme catalyses (2R)-2-phosphoglycerate = (2R)-3-phosphoglycerate. The protein operates within carbohydrate degradation; glycolysis; pyruvate from D-glyceraldehyde 3-phosphate: step 3/5. Functionally, could be non-functional. This is Phosphoglycerate mutase 2 (GPM2) from Saccharomyces cerevisiae (strain ATCC 204508 / S288c) (Baker's yeast).